The sequence spans 49 residues: Large ribosomal subunit protein bL33C (49 aa).

Belongs to the bacterial ribosomal protein bL33 family.

This is Large ribosomal subunit protein bL33C from Lactococcus lactis subsp. cremoris (strain MG1363).